The primary structure comprises 530 residues: Chaperone Ric-8A (530 aa).

Position 435 is a phosphoserine; by CK2 (Ser-435). At Thr-440 the chain carries Phosphothreonine; by CK2. Thr-442 is modified (phosphothreonine). Phosphoserine occurs at positions 501, 522, 523, and 527.

The protein belongs to the synembryn family. Interacts with GDP-bound G alpha proteins GNAI1, GNAO1 and GNAQ, and with GNA13 with lower affinity. Does not interact with G-alpha proteins when they are in complex with subunits beta and gamma. Interacts (via C-terminus) with RGS14; the interaction stimulates the dissociation of the complex between RGS14 and the active GTP-bound form of GNAI1. Interacts with NCS1; interaction is favored in the absence of Ca(2+) and myristoylation of NCS1 is not required. Phosphorylated at Ser-435 and Thr-440 by CK2, stabilizing its interface with G alpha proteins.

It localises to the cytoplasm. The protein localises to the cell cortex. In terms of biological role, chaperone that specifically binds and folds nascent G alpha proteins prior to G protein heterotrimer formation, promoting their stability and activity: folds GNAI1, GNAO1, GNA13 and GNAQ. Does not fold G(s) G-alpha proteins GNAS nor GNAL. Also acts as a guanine nucleotide exchange factor (GEF) for G alpha proteins by stimulating exchange of bound GDP for free GTP. Involved in regulation of microtubule pulling forces during mitotic movement of chromosomes by stimulating G(i)-alpha protein (GNAI1), possibly leading to release G(i)-alpha-GTP and NuMA proteins from the NuMA-GPSM2-G(i)-alpha-GDP complex. Also acts as an activator for G(q)-alpha (GNAQ) protein by enhancing the G(q)-coupled receptor-mediated ERK activation. This Rattus norvegicus (Rat) protein is Chaperone Ric-8A.